Consider the following 2181-residue polypeptide: Non-reducing polyketide synthase subA (2181 aa).

Residues 74–180 form an N-terminal acylcarrier protein transacylase domain (SAT) region; it reads QWVKGNSTQP…LALCCGAYID (107 aa). Residues 347 to 779 enclose the Ketosynthase family 3 (KS3) domain; that stretch reads QAQLLVLGPV…GTNAAMLVCQ (433 aa). Active-site for beta-ketoacyl synthase activity residues include Cys-525, His-661, and His-702. A malonyl-CoA:ACP transacylase (MAT) domain region spans residues 891 to 1193; the sequence is VLAGQTGRRV…SFYPAALGEP (303 aa). Ser-977 (for acyl/malonyl transferase activity) is an active-site residue. Residues 1269 to 1401 are N-terminal hotdog fold; that stretch reads VSLIGKTQNA…GVITLQEVYS (133 aa). One can recognise a PKS/mFAS DH domain in the interval 1269 to 1579; it reads VSLIGKTQNA…FQKIAISSLK (311 aa). Residues 1276 to 1573 form a product template (PT) domain region; that stretch reads QNAGVQTVEY…TILGAKFQKI (298 aa). The C-terminal hotdog fold stretch occupies residues 1425–1579; the sequence is SASVVQGDFI…FQKIAISSLK (155 aa). A disordered region spans residues 1652–1673; sequence ISGSSRSTSSSPPSLESRSQAM. Low complexity predominate over residues 1653 to 1670; it reads SGSSRSTSSSPPSLESRS. A Carrier domain is found at 1677 to 1753; it reads EITEGAGSAL…TLFHTIFPQQ (77 aa). Ser-1713 carries the O-(pantetheine 4'-phosphoryl)serine modification. The tract at residues 1982–2164 is methyltransferase (CMeT) domain; that stretch reads EFMNCLFSYN…QSGFGHVDWT (183 aa).

The protein operates within secondary metabolite biosynthesis; terpenoid biosynthesis. Its function is as follows. Non-reducing polyketide synthase; part of the gene cluster that mediates the biosynthesis of the immunosuppressants subglutinols, meroterpenoids consisting of an alpha-pyrone (4-hydroxy-5,6-dimethyl-2-pyrone) moiety attached to a decalin core fused to a five-membered cyclic ether carrying a prenylside chain. The first step of the pathway is the synthesis of the alpha-pyrone moiety by the polyketide synthase subA via condensation of one acetyl-CoA starter unit with 3 malonyl-CoA units and 2 methylations. The alpha-pyrone is then combined with geranylgeranyl pyrophosphate (GGPP) formed by the GGPP synthase subD through the action of the prenyltransferase subC to yield a linear alpha-pyrone diterpenoid. Subsequent steps in the subglutinol biosynthetic pathway involve the decalin core formation, which is thought to be initiated by the epoxidation of the C10-C11 olefin by the FAD-dependent oxidoreductase subE. The following cyclization cascade would be catalyzed by the terpene cyclase subB. Lastly, the FAD-dependent dehydrogenase subF probably catalyzes the five-membered cyclic ether formation to complete the formation of subglutinol A. Subsequent redox reactions appear to give rise to subglutinol C and D, however, it remains unclear which enzymes are responsible for these transformations. SubD may have secondary function in the conversion of the identified subglutinols to subglutinol analog 45, which seems to be the major product of the cluster. In Metarhizium robertsii (strain ARSEF 23 / ATCC MYA-3075) (Metarhizium anisopliae (strain ARSEF 23)), this protein is Non-reducing polyketide synthase subA.